A 430-amino-acid polypeptide reads, in one-letter code: Adenylosuccinate synthetase (430 aa).

GTP-binding positions include 11–17 (GDEGKGK) and 39–41 (GHT). The active-site Proton acceptor is D12. The Mg(2+) site is built by D12 and G39. IMP contacts are provided by residues 12–15 (DEGK), 37–40 (NAGH), T130, R144, N226, T241, and R305. The active-site Proton donor is H40. 301-307 (VTTGRKR) contributes to the substrate binding site. Residues R307, 333–335 (KLD), and 415–417 (GTG) contribute to the GTP site.

The protein belongs to the adenylosuccinate synthetase family. As to quaternary structure, homodimer. The cofactor is Mg(2+).

The protein localises to the cytoplasm. It carries out the reaction IMP + L-aspartate + GTP = N(6)-(1,2-dicarboxyethyl)-AMP + GDP + phosphate + 2 H(+). Its pathway is purine metabolism; AMP biosynthesis via de novo pathway; AMP from IMP: step 1/2. In terms of biological role, plays an important role in the de novo pathway and in the salvage pathway of purine nucleotide biosynthesis. Catalyzes the first committed step in the biosynthesis of AMP from IMP. This chain is Adenylosuccinate synthetase, found in Scheffersomyces stipitis (strain ATCC 58785 / CBS 6054 / NBRC 10063 / NRRL Y-11545) (Yeast).